A 180-amino-acid polypeptide reads, in one-letter code: Phosphoribosylaminoimidazole carboxylase (180 aa).

The substrate site is built by S35, D38, S62, K65, G89, and S91.

It belongs to the AIR carboxylase family. Class II subfamily.

It carries out the reaction 5-amino-1-(5-phospho-D-ribosyl)imidazole-4-carboxylate + H(+) = 5-amino-1-(5-phospho-beta-D-ribosyl)imidazole + CO2. The protein operates within purine metabolism; IMP biosynthesis via de novo pathway; 5-amino-1-(5-phospho-D-ribosyl)imidazole-4-carboxylate from 5-amino-1-(5-phospho-D-ribosyl)imidazole (carboxylase route): step 1/1. Its function is as follows. Catalyzes the reversible conversion of 5-aminoimidazole ribonucleotide (AIR) and CO(2) to 4-carboxy-5-aminoimidazole ribonucleotide (CAIR). In Archaeoglobus fulgidus (strain ATCC 49558 / DSM 4304 / JCM 9628 / NBRC 100126 / VC-16), this protein is Phosphoribosylaminoimidazole carboxylase.